Consider the following 919-residue polypeptide: MWNKTRTTLLAVGVLFHLFYLWSIFDIYFISPLVHGMSPYQSTPTPPAKRLFLIVGDGLRADTTFDKVTHPVSGKTEFLAPFIRSLVMNNATYGISHTRMPTESRPGHVAMIAGFYEDVSAVTKGWKSNPVNFDSFFNQSTHTYSFGSPDILPMFKDGASDPNKVDTWMYDHTFEDFTQSSIELDAFVFRHLDQLFHNSTLNSTLDYEIRQDGNVFFLHLLGCDTAGHSYRPYSAEYYDNVKYIDDQIPILIDKVNKFFADDKTAFIFTADHGMSAFGSHGDGHPNNTRTPLVAWGAGLNKPVHNPFPVSDNYTENWELSSIKRNDVKQADIASLMSYLIGVNYPKNSVGELPIAYIDGKESDKLAALYNNARSILEQYLVKQDEVIDSQFFYKEYFKFVEKSHSHYLEEIETLIQRISEGENYLEQEAITLTEELMQITLEGLHYLTTYNWRFIRTIVTFGFVGWIFFSFIIFLKSFILENVIDDQKASPLSHAVFGSIGILLNWILFYQHSPFNFYMYLLFPLYFWSYIFTNRSVLRSGIKEFFKGTSPWKRVLITISIISVYEGIVYGFFHRWTFTLITNILAFYPFICGVRELSVNILWIITSVLLSTFTLFDAVKIEDLNQIHLAGLLIILSAFYALYKIHSRINSYTRAIFAIQISLVAAMLAVTHRSVISLQLRQGLPRESQVAGWIIFFVSLFVMPILHYRKPNNDYKVRLLIIYLTFAPSFIILTISFESLFYFLFTSYMVQWIEIENKIKEMKTQKDENWLQVLRVSVIGFFLLQVAFFGTGNVASISSFSLESVCRLLPIFDPFLMGALLMLKLIIPYGLLSTCLGILNLKLNFKDYTISSLIISMSDILSLNFFYLLRTEGSWLDIGITISNYCLAILSSLFMLILEVLGHVLLKNVIIQDKTKKTQ.

At 1–9 (MWNKTRTTL) the chain is on the cytoplasmic side. The helical transmembrane segment at 10-30 (LAVGVLFHLFYLWSIFDIYFI) threads the bilayer. The Lumenal portion of the chain corresponds to 31 to 457 (SPLVHGMSPY…TTYNWRFIRT (427 aa)). N-linked (GlcNAc...) asparagine glycosylation is found at Asn-90, Asn-138, Asn-198, Asn-202, Asn-286, and Asn-312. The chain crosses the membrane as a helical span at residues 458-478 (IVTFGFVGWIFFSFIIFLKSF). The Cytoplasmic portion of the chain corresponds to 479-488 (ILENVIDDQK). A helical membrane pass occupies residues 489 to 509 (ASPLSHAVFGSIGILLNWILF). The Lumenal portion of the chain corresponds to 510-512 (YQH). Residues 513–533 (SPFNFYMYLLFPLYFWSYIFT) form a helical membrane-spanning segment. The Cytoplasmic segment spans residues 534 to 553 (NRSVLRSGIKEFFKGTSPWK). Residues 554–574 (RVLITISIISVYEGIVYGFFH) form a helical membrane-spanning segment. The Lumenal portion of the chain corresponds to 575–576 (RW). The helical transmembrane segment at 577–597 (TFTLITNILAFYPFICGVREL) threads the bilayer. Position 598 (Ser-598) is a topological domain, cytoplasmic. A helical transmembrane segment spans residues 599–619 (VNILWIITSVLLSTFTLFDAV). Topologically, residues 620 to 626 (KIEDLNQ) are lumenal. Residues 627-647 (IHLAGLLIILSAFYALYKIHS) traverse the membrane as a helical segment. Topologically, residues 648-655 (RINSYTRA) are cytoplasmic. A helical membrane pass occupies residues 656-676 (IFAIQISLVAAMLAVTHRSVI). Residues 677–687 (SLQLRQGLPRE) are Lumenal-facing. The helical transmembrane segment at 688 to 708 (SQVAGWIIFFVSLFVMPILHY) threads the bilayer. Topologically, residues 709–720 (RKPNNDYKVRLL) are cytoplasmic. The helical transmembrane segment at 721–741 (IIYLTFAPSFIILTISFESLF) threads the bilayer. At 742–776 (YFLFTSYMVQWIEIENKIKEMKTQKDENWLQVLRV) the chain is on the lumenal side. A helical transmembrane segment spans residues 777-797 (SVIGFFLLQVAFFGTGNVASI). The Cytoplasmic portion of the chain corresponds to 798–807 (SSFSLESVCR). The chain crosses the membrane as a helical span at residues 808-828 (LLPIFDPFLMGALLMLKLIIP). Residues 829–848 (YGLLSTCLGILNLKLNFKDY) lie on the Lumenal side of the membrane. A helical membrane pass occupies residues 849-869 (TISSLIISMSDILSLNFFYLL). The Cytoplasmic segment spans residues 870–885 (RTEGSWLDIGITISNY). A helical membrane pass occupies residues 886–906 (CLAILSSLFMLILEVLGHVLL). The Lumenal portion of the chain corresponds to 907–919 (KNVIIQDKTKKTQ).

It belongs to the PIGG/PIGN/PIGO family. PIGN subfamily. As to quaternary structure, interacts with CSF1; CSF1 channels phosphatidylethanolamine to MCD4 in the endoplasmic reticulum at contact sites to support GPI anchor biosynthesis. Post-translationally, N-glycosylated.

The protein localises to the endoplasmic reticulum membrane. It localises to the golgi apparatus membrane. The protein resides in the vacuole membrane. It participates in glycolipid biosynthesis; glycosylphosphatidylinositol-anchor biosynthesis. Its function is as follows. Ethanolamine phosphate transferase involved in glycosylphosphatidylinositol-anchor biosynthesis. Transfers ethanolamine phosphate to the first alpha-1,4-linked mannose of the glycosylphosphatidylinositol precursor of GPI-anchor. Ethanolamine phosphate on the alpha-1,4-linked mannose is essential for further mannosylation by GPI10 and is necessary for an efficient recognition of GPI lipids and GPI proteins by the GPI transamidase, for the efficient transport of GPI anchored proteins from endoplasmic reticulum to Golgi and for the physiological incorporation of ceramides into GPI anchors by lipid remodeling. Also involved in non-mitochondrial ATP movements across membrane and participates in Golgi and endoplasmic reticulum function, Also required for the incorporation of BGL2 into the cell wall. The protein is GPI ethanolamine phosphate transferase 1 (MCD4) of Saccharomyces cerevisiae (strain ATCC 204508 / S288c) (Baker's yeast).